We begin with the raw amino-acid sequence, 613 residues long: Leucine-rich repeat and immunoglobulin-like domain-containing nogo receptor-interacting protein 1 (613 aa).

The first 34 residues, 1–34, serve as a signal peptide directing secretion; sequence MLAGEASMRSPILACWQPILLLMLGSILSGSATG. Cystine bridges form between Cys35-Cys41 and Cys39-Cys50. One can recognise an LRRNT domain in the interval 35–64; that stretch reads CPPRCECSAQERAVLCHRKRFMVVPEGIPT. Topologically, residues 35-554 are extracellular; it reads CPPRCECSAQ…FDIKTLIIAT (520 aa). 11 LRR repeats span residues 65–86, 89–110, 113–134, 137–158, 161–182, 185–206, 209–230, 257–278, 281–302, 305–326, and 329–350; these read ETRQLDLGKNRIKTLNQDEFAN, HLEELELNENIISAIEPGAFNN, NLRTLGLRSNRLKLIPLGVFTG, NLTKLDISENKIVILLDYMFQD, NLKSLEVGDNDLVYISHRAFSG, SLEQLTLEKCNLTSIPTEALSH, GLIVLRLRHLNINAIRDYSFKR, NLTSLSITHCNLTSIPYVSVRH, YLRFLNLSYNPIVTIEGSMLHD, RLQEIQLVGGQLTTVEPFAFRG, and YLRILNVSGNLLTTLEESAFHS. The N-linked (GlcNAc...) asparagine glycan is linked to Asn137. N-linked (GlcNAc...) asparagine glycosylation occurs at Asn195. 3 N-linked (GlcNAc...) asparagine glycosylation sites follow: Asn257, Asn267, and Asn286. Asn334 carries an N-linked (GlcNAc...) asparagine glycan. An LRRCT domain is found at 362 to 416; that stretch reads NPLACDCRLLWVFRRRWRLNFNKQQPTCSTPEFVQGKEFKDFPDVLLPNYFTCRR. Intrachain disulfides connect Cys366-Cys389, Cys368-Cys414, and Cys439-Cys490. An Ig-like C2-type domain is found at 404–508; it reads PDVLLPNYFT…DTMLAHLHVR (105 aa). 5 N-linked (GlcNAc...) asparagine glycosylation sites follow: Asn485, Asn498, Asn519, Asn530, and Asn535. The helical transmembrane segment at 555–575 threads the bilayer; it reads TMGFISFLGVVLFCLVLLFLW. The Cytoplasmic portion of the chain corresponds to 576-613; that stretch reads SRGKGNTKHNIEIEYVPRKSDAGISSADAPRKFNMKMI.

Homotetramer. Forms ternary complex with RTN4R/NGFR and RTN4R/TNFRSF19. Post-translationally, N-glycosylated. Contains predominantly high-mannose glycans.

The protein resides in the cell membrane. Functional component of the Nogo receptor signaling complex (RTN4R/NGFR) in RhoA activation responsible for some inhibition of axonal regeneration by myelin-associated factors. Is also an important negative regulator of oligodentrocyte differentiation and axonal myelination. The chain is Leucine-rich repeat and immunoglobulin-like domain-containing nogo receptor-interacting protein 1 (LINGO1) from Gallus gallus (Chicken).